Reading from the N-terminus, the 131-residue chain is Small ribosomal subunit protein uS11 (131 aa).

Belongs to the universal ribosomal protein uS11 family. Part of the 30S ribosomal subunit. Interacts with proteins S7 and S18. Binds to IF-3.

Its function is as follows. Located on the platform of the 30S subunit, it bridges several disparate RNA helices of the 16S rRNA. Forms part of the Shine-Dalgarno cleft in the 70S ribosome. The polypeptide is Small ribosomal subunit protein uS11 (Helicobacter pylori (strain Shi470)).